The chain runs to 354 residues: Polyprenal reductase 1 (354 aa).

6 consecutive transmembrane segments (helical) span residues 11-31 (PLLC…ALPI), 78-98 (FMHF…AIWF), 141-158 (YHVW…IQVL), 176-196 (MHIV…LSLA), 235-255 (PLLK…WGSL), and 301-321 (GMLV…VFVI).

Belongs to the steroid 5-alpha reductase family. Polyprenal reductase subfamily.

It localises to the cell membrane. The enzyme catalyses a di-trans,poly-cis-dolichal + NADP(+) = a di-trans,poly-cis-polyprenal + NADPH + H(+). It participates in protein modification; protein glycosylation. Functionally, plays a key role in early steps of protein N-linked glycosylation by being involved in the conversion of polyprenol into dolichol. Acts as a polyprenal reductase that mediates the reduction of polyprenal into dolichal in a NADP-dependent mechanism. Dolichols are required for the synthesis of dolichol-linked monosaccharides and the oligosaccharide precursor used for N-glycosylation. This chain is Polyprenal reductase 1, found in Oryza sativa subsp. indica (Rice).